Reading from the N-terminus, the 390-residue chain is Probable tRNA sulfurtransferase (390 aa).

The 104-residue stretch at 58 to 161 (EAVARRLQRV…DEGAYIYSRI (104 aa)) folds into the THUMP domain. ATP is bound by residues 179-180 (LI), 204-205 (HF), R261, G283, and Q292.

It belongs to the ThiI family.

It localises to the cytoplasm. It catalyses the reaction [ThiI sulfur-carrier protein]-S-sulfanyl-L-cysteine + a uridine in tRNA + 2 reduced [2Fe-2S]-[ferredoxin] + ATP + H(+) = [ThiI sulfur-carrier protein]-L-cysteine + a 4-thiouridine in tRNA + 2 oxidized [2Fe-2S]-[ferredoxin] + AMP + diphosphate. It carries out the reaction [ThiS sulfur-carrier protein]-C-terminal Gly-Gly-AMP + S-sulfanyl-L-cysteinyl-[cysteine desulfurase] + AH2 = [ThiS sulfur-carrier protein]-C-terminal-Gly-aminoethanethioate + L-cysteinyl-[cysteine desulfurase] + A + AMP + 2 H(+). It participates in cofactor biosynthesis; thiamine diphosphate biosynthesis. Catalyzes the ATP-dependent transfer of a sulfur to tRNA to produce 4-thiouridine in position 8 of tRNAs, which functions as a near-UV photosensor. Also catalyzes the transfer of sulfur to the sulfur carrier protein ThiS, forming ThiS-thiocarboxylate. This is a step in the synthesis of thiazole, in the thiamine biosynthesis pathway. The sulfur is donated as persulfide by IscS. The chain is Probable tRNA sulfurtransferase from Moorella thermoacetica (strain ATCC 39073 / JCM 9320).